The chain runs to 261 residues: DNA repair protein RecO (261 aa).

This sequence belongs to the RecO family.

In terms of biological role, involved in DNA repair and RecF pathway recombination. The polypeptide is DNA repair protein RecO (Limosilactobacillus reuteri (strain DSM 20016) (Lactobacillus reuteri)).